The primary structure comprises 469 residues: Minor capsid protein L2 (469 aa).

The short motif at 1 to 13 (MRHKRSTKRVKRA) is the Nuclear localization signal element. C22 and C28 are disulfide-bonded. The Nuclear localization signal motif lies at 450-458 (LLKRRRKRI).

Belongs to the papillomaviridae L2 protein family. In terms of assembly, interacts with major capsid protein L1. Interacts with E2; this interaction inhibits E2 transcriptional activity but not the DNA replication function E2. Interacts with host GADD45GIP1. Interacts with host HSPA8; this interaction is required for L2 nuclear translocation. Interacts with host importins KPNB2 and KPNB3. Forms a complex with importin alpha2-beta1 heterodimers via interaction with the importin alpha2 adapter. Interacts with host DYNLT1; this interaction is essential for virus intracellular transport during entry. Interacts (via C-terminus) with host retromer subunits VPS35 and VPS29. In terms of processing, highly phosphorylated.

The protein localises to the virion. It localises to the host nucleus. The protein resides in the host early endosome. Its subcellular location is the host Golgi apparatus. Its function is as follows. Minor protein of the capsid that localizes along the inner surface of the virion, within the central cavities beneath the L1 pentamers. Plays a role in capsid stabilization through interaction with the major capsid protein L1. Once the virion enters the host cell, L2 escorts the genomic DNA into the nucleus by promoting escape from the endosomal compartments and traffic through the host Golgi network. Mechanistically, the C-terminus of L2 possesses a cell-penetrating peptide that protudes from the host endosome, interacts with host cytoplasmic retromer cargo and thereby mediates the capsid delivery to the host trans-Golgi network. Plays a role through its interaction with host dynein in the intracellular microtubule-dependent transport of viral capsid toward the nucleus. Mediates the viral genome import into the nucleus through binding to host importins. Once within the nucleus, L2 localizes viral genomes to host PML bodies in order to activate early gene expression for establishment of infection. Later on, promotes late gene expression by interacting with the viral E2 protein and by inhibiting its transcriptional activation functions. During virion assembly, encapsidates the genome by direct interaction with the viral DNA. This chain is Minor capsid protein L2, found in Human papillomavirus 35.